We begin with the raw amino-acid sequence, 101 residues long: Large ribosomal subunit protein uL23c (101 aa).

Belongs to the universal ribosomal protein uL23 family. In terms of assembly, part of the 50S ribosomal subunit.

Its subcellular location is the plastid. It localises to the chloroplast. Functionally, binds to 23S rRNA. In Cyanidium caldarium (Red alga), this protein is Large ribosomal subunit protein uL23c (rpl23).